The following is a 667-amino-acid chain: uncharacterized protein (667 aa).

This is an uncharacterized protein from Mycoplasma genitalium (strain ATCC 33530 / DSM 19775 / NCTC 10195 / G37) (Mycoplasmoides genitalium).